We begin with the raw amino-acid sequence, 317 residues long: Probable cell division protein WhiA (317 aa).

Positions 275–308 (SLKELGEMLVPKVGKSGVNHRMRKIDELAEKLEE) form a DNA-binding region, H-T-H motif.

This sequence belongs to the WhiA family.

Its function is as follows. Involved in cell division and chromosome segregation. The protein is Probable cell division protein WhiA of Desulfitobacterium hafniense (strain Y51).